Reading from the N-terminus, the 344-residue chain is N-acetyl-gamma-glutamyl-phosphate reductase (344 aa).

C150 is an active-site residue.

It belongs to the NAGSA dehydrogenase family. Type 1 subfamily.

Its subcellular location is the cytoplasm. The catalysed reaction is N-acetyl-L-glutamate 5-semialdehyde + phosphate + NADP(+) = N-acetyl-L-glutamyl 5-phosphate + NADPH + H(+). It participates in amino-acid biosynthesis; L-arginine biosynthesis; N(2)-acetyl-L-ornithine from L-glutamate: step 3/4. In terms of biological role, catalyzes the NADPH-dependent reduction of N-acetyl-5-glutamyl phosphate to yield N-acetyl-L-glutamate 5-semialdehyde. The chain is N-acetyl-gamma-glutamyl-phosphate reductase from Pseudomonas savastanoi pv. phaseolicola (strain 1448A / Race 6) (Pseudomonas syringae pv. phaseolicola (strain 1448A / Race 6)).